We begin with the raw amino-acid sequence, 73 residues long: Homeodomain-only protein (73 aa).

The homeobox; degenerate DNA-binding region spans 3-62 (AEPANGPTEDQVEILEYNFNKVNRHPDPTTLCLIAAEAGLSEEETQKWFKQRLAQWRRSE).

As to quaternary structure, interacts with serum response factor (SRF). Component of a large complex containing histone deacetylases such as HDAC2. Interacts with the acetylated forms of HSPA1A and HSPA1B. Interacts with HSPA8.

It localises to the nucleus. The protein resides in the cytoplasm. Functionally, atypical homeodomain protein which does not bind DNA and is required to modulate cardiac growth and development. Acts via its interaction with SRF, thereby modulating the expression of SRF-dependent cardiac-specific genes and cardiac development. Prevents SRF-dependent transcription either by inhibiting SRF binding to DNA or by recruiting histone deacetylase (HDAC) proteins that prevent transcription by SRF. Overexpression causes cardiac hypertrophy. Acts as a co-chaperone for HSPA1A and HSPA1B chaperone proteins and assists in chaperone-mediated protein refolding. The protein is Homeodomain-only protein (HOPX) of Sus scrofa (Pig).